The primary structure comprises 69 residues: Conopeptide Y-Fe1 (69 aa).

Positions 1–20 are cleaved as a signal peptide; the sequence is MSKLGVVLFVFLLLLPLAAP. Residues 21 to 69 constitute a propeptide that is removed on maturation; it reads QPVGDQPADQPADRNAEARGTYLYPFSYYRLWRYFTRFLHKQPYYYVHI.

It belongs to the conotoxin M superfamily. Conopeptide Y family. In terms of tissue distribution, expressed by the venom duct.

It is found in the secreted. Functionally, tyrosine-rich conopeptide that specifically targets voltage-gated potassium channel Kv1.6/KCNA6 (IC(50) is 8.8 uM) that is expressed in Xenopus oocytes. In vivo, causes seizures (at 5 nmol) and death (20 nmol) when intracranially injected into mice, and causes paralysis (at 10 pmol) to C.elegans. The sequence is that of Conopeptide Y-Fe1 from Conus ferrugineus (Cone snail).